Here is a 98-residue protein sequence, read N- to C-terminus: Large ribosomal subunit protein uL23 (98 aa).

It belongs to the universal ribosomal protein uL23 family. In terms of assembly, part of the 50S ribosomal subunit. Contacts protein L29, and trigger factor when it is bound to the ribosome.

Functionally, one of the early assembly proteins it binds 23S rRNA. One of the proteins that surrounds the polypeptide exit tunnel on the outside of the ribosome. Forms the main docking site for trigger factor binding to the ribosome. The chain is Large ribosomal subunit protein uL23 from Clostridium beijerinckii (strain ATCC 51743 / NCIMB 8052) (Clostridium acetobutylicum).